A 146-amino-acid chain; its full sequence is Vascular endothelial growth factor A (146 aa).

A signal peptide spans 1 to 26 (MNFLLSWVHWSLALLLYLHHAKWSQA). 3 cysteine pairs are disulfide-bonded: cysteine 51/cysteine 93, cysteine 82/cysteine 127, and cysteine 86/cysteine 129. Asparagine 100 carries N-linked (GlcNAc...) asparagine glycosylation.

The protein belongs to the PDGF/VEGF growth factor family. Homodimer; disulfide-linked. Also found as heterodimer with PGF. Interacts with NRP1. Interacts with isoform 2 of BSG. Interacts with CD82; this interaction inhibits VEGFA-mediated signaling pathway.

Growth factor active in angiogenesis, vasculogenesis and endothelial cell growth. Induces endothelial cell proliferation, promotes cell migration, inhibits apoptosis and induces permeabilization of blood vessels. Binds to the FLT1/VEGFR1 and KDR/VEGFR2 receptors, heparan sulfate and heparin. Binding to NRP1 receptor initiates a signaling pathway needed for motor neuron axon guidance and cell body migration, including for the caudal migration of facial motor neurons from rhombomere 4 to rhombomere 6 during embryonic development. Also binds the DEAR/FBXW7-AS1 receptor. In Ovis aries (Sheep), this protein is Vascular endothelial growth factor A (VEGFA).